A 525-amino-acid chain; its full sequence is Peptide chain release factor 3 (525 aa).

A tr-type G domain is found at 9–276 (AKRRTFAIIS…GFTRYAPAPQ (268 aa)). GTP-binding positions include 18-25 (SHPDAGKT), 86-90 (DTPGH), and 140-143 (NKFD).

This sequence belongs to the TRAFAC class translation factor GTPase superfamily. Classic translation factor GTPase family. PrfC subfamily.

The protein resides in the cytoplasm. Its function is as follows. Increases the formation of ribosomal termination complexes and stimulates activities of RF-1 and RF-2. It binds guanine nucleotides and has strong preference for UGA stop codons. It may interact directly with the ribosome. The stimulation of RF-1 and RF-2 is significantly reduced by GTP and GDP, but not by GMP. This chain is Peptide chain release factor 3, found in Francisella tularensis subsp. mediasiatica (strain FSC147).